The chain runs to 278 residues: uncharacterized protein (278 aa).

Topologically, residues methionine 1 to valine 34 are cytoplasmic. A helical membrane pass occupies residues leucine 35–phenylalanine 55. At lysine 56–threonine 129 the chain is on the extracellular side. Residues leucine 130 to tyrosine 150 form a helical membrane-spanning segment. Residues methionine 151 to arginine 180 are Cytoplasmic-facing. Residues lysine 181–threonine 201 form a helical membrane-spanning segment. The Extracellular portion of the chain corresponds to isoleucine 202–lysine 205. A helical membrane pass occupies residues threonine 206–leucine 222. The Cytoplasmic portion of the chain corresponds to arginine 223–alanine 278.

It is found in the cell membrane. This is an uncharacterized protein from Saccharomyces cerevisiae (strain ATCC 204508 / S288c) (Baker's yeast).